The sequence spans 414 residues: Histidinol dehydrogenase (414 aa).

Positions 116, 177, and 200 each coordinate NAD(+). Substrate is bound by residues threonine 223, glutamine 245, and histidine 248. Zn(2+) is bound by residues glutamine 245 and histidine 248. Catalysis depends on proton acceptor residues glutamate 313 and histidine 314. Residues histidine 314, aspartate 347, glutamate 401, and histidine 406 each contribute to the substrate site. Aspartate 347 contacts Zn(2+). Zn(2+) is bound at residue histidine 406.

It belongs to the histidinol dehydrogenase family. It depends on Zn(2+) as a cofactor.

It carries out the reaction L-histidinol + 2 NAD(+) + H2O = L-histidine + 2 NADH + 3 H(+). It functions in the pathway amino-acid biosynthesis; L-histidine biosynthesis; L-histidine from 5-phospho-alpha-D-ribose 1-diphosphate: step 9/9. Catalyzes the sequential NAD-dependent oxidations of L-histidinol to L-histidinaldehyde and then to L-histidine. The protein is Histidinol dehydrogenase of Staphylococcus epidermidis (strain ATCC 12228 / FDA PCI 1200).